The following is a 416-amino-acid chain: Glutamate dehydrogenase (416 aa).

Lys105 is an active-site residue.

The protein belongs to the Glu/Leu/Phe/Val dehydrogenases family. In terms of assembly, homohexamer.

The enzyme catalyses L-glutamate + NAD(+) + H2O = 2-oxoglutarate + NH4(+) + NADH + H(+). It catalyses the reaction L-glutamate + NADP(+) + H2O = 2-oxoglutarate + NH4(+) + NADPH + H(+). The protein is Glutamate dehydrogenase (gdhA) of Thermotoga maritima (strain ATCC 43589 / DSM 3109 / JCM 10099 / NBRC 100826 / MSB8).